The following is a 153-amino-acid chain: Salivary C-type lectin 1 (153 aa).

An N-terminal signal peptide occupies residues 1-19 (MIFSLYLIVAISLADLTAA). Residues 26 to 151 (KNRFCFPNVV…CSSTRRFVCE (126 aa)) enclose the C-type lectin domain. 2 disulfide bridges follow: cysteine 45/cysteine 150 and cysteine 122/cysteine 142.

It depends on Ca(2+) as a cofactor. In terms of tissue distribution, expressed in female salivary gland. Not detected or low-level expression in female midgut and fat body.

The protein localises to the secreted. Functionally, salivary protein with carbohydrate-binding activity; exibits high affinity for D-mannose. Agglutinates host erythrocytes. Probably participates in mosquito innate immune responses to prevent microorganism multiplication in sugar and blood meals. (Microbial infection) Agglutinates Staphylococcus aureus in vitro. Its function is as follows. (Microbial infection) Agglutinates Candida albicans in vitro. In terms of biological role, (Microbial infection) Does not agglutinate Escherichia coli in vitro. This Aedes albopictus (Asian tiger mosquito) protein is Salivary C-type lectin 1.